The chain runs to 157 residues: Peptide methionine sulfoxide reductase MsrA (157 aa).

Cys13 is an active-site residue.

This sequence belongs to the MsrA Met sulfoxide reductase family.

The catalysed reaction is L-methionyl-[protein] + [thioredoxin]-disulfide + H2O = L-methionyl-(S)-S-oxide-[protein] + [thioredoxin]-dithiol. It carries out the reaction [thioredoxin]-disulfide + L-methionine + H2O = L-methionine (S)-S-oxide + [thioredoxin]-dithiol. Has an important function as a repair enzyme for proteins that have been inactivated by oxidation. Catalyzes the reversible oxidation-reduction of methionine sulfoxide in proteins to methionine. This chain is Peptide methionine sulfoxide reductase MsrA, found in Methanococcus maripaludis (strain C5 / ATCC BAA-1333).